A 335-amino-acid chain; its full sequence is NADH-quinone oxidoreductase subunit H (335 aa).

Transmembrane regions (helical) follow at residues 11-31, 81-101, 114-134, 154-174, 187-207, 238-258, 270-290, and 307-327; these read VILTVVKAIVILLAVVIAGAL, VIFTLAPVVAMSALLIAFAII, IGLLFFFAMAGLSVYAVLFAG, VSYEVFMGLALMGIVVQVGSF, LWFIIPQFFGFCTFFIAGVAV, FFVGEYIGIILISALLVTLFF, QLSFVWFALKTAFFIMLFILL, and WKFCLPLTLINLLITAAVVLW.

It belongs to the complex I subunit 1 family. NDH-1 is composed of 13 different subunits. Subunits NuoA, H, J, K, L, M, N constitute the membrane sector of the complex.

It is found in the cell inner membrane. It catalyses the reaction a quinone + NADH + 5 H(+)(in) = a quinol + NAD(+) + 4 H(+)(out). In terms of biological role, NDH-1 shuttles electrons from NADH, via FMN and iron-sulfur (Fe-S) centers, to quinones in the respiratory chain. The immediate electron acceptor for the enzyme in this species is believed to be ubiquinone. Couples the redox reaction to proton translocation (for every two electrons transferred, four hydrogen ions are translocated across the cytoplasmic membrane), and thus conserves the redox energy in a proton gradient. This subunit may bind ubiquinone. This chain is NADH-quinone oxidoreductase subunit H, found in Pseudomonas fluorescens (strain ATCC BAA-477 / NRRL B-23932 / Pf-5).